A 513-amino-acid polypeptide reads, in one-letter code: Maturase K (513 aa).

The protein belongs to the intron maturase 2 family. MatK subfamily.

It is found in the plastid. It localises to the chloroplast. Functionally, usually encoded in the trnK tRNA gene intron. Probably assists in splicing its own and other chloroplast group II introns. The sequence is that of Maturase K from Cyrilla racemiflora (Swamp titi).